The following is a 176-amino-acid chain: MSRVAKAPVAIPAGVEVTLNEQTITVKGTKGSLTRVINSDVSVVVEDNEIKCSPVESAKTAAQAGTARALINNMVVGVTDGFVKKLQLVGVGYRAKLAGKDIDLTLGFSHPLVHKLPDGVTAECPSQTEIVLSGTDKQLIGQVAAEIRGYRPPEPYKGKGVRYADEQVRRKEAKKK.

The span at 151 to 170 (RPPEPYKGKGVRYADEQVRR) shows a compositional bias: basic and acidic residues. The disordered stretch occupies residues 151–176 (RPPEPYKGKGVRYADEQVRRKEAKKK).

It belongs to the universal ribosomal protein uL6 family. Part of the 50S ribosomal subunit.

In terms of biological role, this protein binds to the 23S rRNA, and is important in its secondary structure. It is located near the subunit interface in the base of the L7/L12 stalk, and near the tRNA binding site of the peptidyltransferase center. The polypeptide is Large ribosomal subunit protein uL6 (Shewanella pealeana (strain ATCC 700345 / ANG-SQ1)).